A 353-amino-acid polypeptide reads, in one-letter code: tRNA N6-adenosine threonylcarbamoyltransferase (353 aa).

Residues H119 and H123 each contribute to the Fe cation site. Substrate contacts are provided by residues 145-149, D178, G191, and N285; that span reads LVSGG. Position 313 (D313) interacts with Fe cation.

The protein belongs to the KAE1 / TsaD family. The cofactor is Fe(2+).

Its subcellular location is the cytoplasm. It catalyses the reaction L-threonylcarbamoyladenylate + adenosine(37) in tRNA = N(6)-L-threonylcarbamoyladenosine(37) in tRNA + AMP + H(+). In terms of biological role, required for the formation of a threonylcarbamoyl group on adenosine at position 37 (t(6)A37) in tRNAs that read codons beginning with adenine. Is involved in the transfer of the threonylcarbamoyl moiety of threonylcarbamoyl-AMP (TC-AMP) to the N6 group of A37, together with TsaE and TsaB. TsaD likely plays a direct catalytic role in this reaction. This is tRNA N6-adenosine threonylcarbamoyltransferase from Magnetococcus marinus (strain ATCC BAA-1437 / JCM 17883 / MC-1).